A 659-amino-acid polypeptide reads, in one-letter code: MIRMGGRKMNPNNRSEYDTIKVTPNSELPTNHNQYPLADNPNSTLEELNYKEFLRMTADNSTEVLDSSTVKDAVGTGISVVGQILGVVGVPFAGALTSFYQSFLNAIWPSDADPWKAFMAQVEVLIDKKIEEYAKSKALAELQGLQNNFEDYVNALDSWKKAPVNLRSRRSQDRIRELFSQAESHFRNSMPSFAVSKFEVLFLPTYAQAANTHLLLLKDAQVFGEEWGYSSEDIAEFYQRQLKLTQQYTDHCVNWYNVGLNSLRGSTYDAWVKFNRFRREMTLTVLDLIVLFPFYDVRLYSKGVKTELTRDIFTDPIFTLNALQEYGPTFSSIENSIRKPHLFDYLRGIEFHTRLRPGYSGKDSFNYWSGNYVETRPSIGSNDTITSPFYGDKSIEPIQKLSFDGQKVYRTIANTDIAAFPDGKIYFGVTKVDFSQYDDQKNETSTQTYDSKRYNGYLGAQDSIDQLPPETTDEPLEKAYSHQLNYAECFLMQDRRGTIPFFTWTHRSVDFFNTIDAEKITQLPVVKAYALSSGASIIEGPGFTGGNLLFLKESSNSIAKFKVTLNSAALLQRYRVRIRYASTTNLRLFVQNSNNDFLVIYINKTMNIDGDLTYQTFDFATSNSNMGFSGDTNDFIIGAESFVSNEKIYIDKIEFIPVQ.

Residues 1-41 (MIRMGGRKMNPNNRSEYDTIKVTPNSELPTNHNQYPLADNP) form a disordered region. The segment covering 22-41 (VTPNSELPTNHNQYPLADNP) has biased composition (polar residues).

Belongs to the delta endotoxin family.

In terms of biological role, promotes colloidosmotic lysis by binding to the midgut epithelial cells of Coleoptera. The protein is Pesticidal crystal protein Cry3Ba (cry3Ba) of Bacillus thuringiensis subsp. tolworthi.